We begin with the raw amino-acid sequence, 225 residues long: Ribonuclease 3 (225 aa).

The RNase III domain maps to 7-132 (MKAFEARLGY…VIAAVYRDGG (126 aa)). Position 45 (Glu45) interacts with Mg(2+). Asp49 is an active-site residue. Mg(2+) is bound by residues Asp118 and Glu121. Glu121 is an active-site residue. A DRBM domain is found at 157-225 (DAKTALQEWA…AARKLLDSLD (69 aa)).

This sequence belongs to the ribonuclease III family. As to quaternary structure, homodimer. Requires Mg(2+) as cofactor.

It is found in the cytoplasm. The catalysed reaction is Endonucleolytic cleavage to 5'-phosphomonoester.. Functionally, digests double-stranded RNA. Involved in the processing of primary rRNA transcript to yield the immediate precursors to the large and small rRNAs (23S and 16S). Processes some mRNAs, and tRNAs when they are encoded in the rRNA operon. Processes pre-crRNA and tracrRNA of type II CRISPR loci if present in the organism. This Ruegeria pomeroyi (strain ATCC 700808 / DSM 15171 / DSS-3) (Silicibacter pomeroyi) protein is Ribonuclease 3.